Reading from the N-terminus, the 117-residue chain is Large ribosomal subunit protein uL18 (117 aa).

It belongs to the universal ribosomal protein uL18 family. Part of the 50S ribosomal subunit; part of the 5S rRNA/L5/L18/L25 subcomplex. Contacts the 5S and 23S rRNAs.

Functionally, this is one of the proteins that bind and probably mediate the attachment of the 5S RNA into the large ribosomal subunit, where it forms part of the central protuberance. The chain is Large ribosomal subunit protein uL18 from Onion yellows phytoplasma (strain OY-M).